Here is a 550-residue protein sequence, read N- to C-terminus: Coiled-coil domain-containing protein 60 (550 aa).

The segment at 1-21 (MTKVPATKKLQSSPNSGAVRP) is disordered. Residues 71–98 (AILREETAKKKKQQQLQKLKEEERNKFQ) are a coiled coil. 2 disordered regions span residues 219 to 293 (KFKI…EPLY) and 336 to 367 (AYKEMQTTLKSSERSSSTSAESHIQPVQKKSK). The segment covering 235 to 256 (RGSTLSLSRASGGSSPQSSMIS) has biased composition (low complexity). Polar residues predominate over residues 336–345 (AYKEMQTTLK).

In Homo sapiens (Human), this protein is Coiled-coil domain-containing protein 60 (CCDC60).